Reading from the N-terminus, the 652-residue chain is Probable L-type lectin-domain containing receptor kinase S.5 (652 aa).

The signal sequence occupies residues 1 to 20 (MRFSLAWKLLFLILTCKIET). At 21–266 (QVKCLKFDFP…EGLKIDGDGN (246 aa)) the chain is on the extracellular side. Residues 24–257 (CLKFDFPGFN…LNCVRSWSFE (234 aa)) are legume-lectin like. Residues Asn33, Asn91, Asn97, Asn100, Asn122, Asn139, Asn201, and Asn244 are each glycosylated (N-linked (GlcNAc...) asparagine). Residues 267–287 (MLWLWITIPIVFIVGIGAFLG) form a helical membrane-spanning segment. Topologically, residues 288 to 652 (ALYLRSRSKA…INSLTELTGR (365 aa)) are cytoplasmic. Residues 330-622 (FGAENKLGQG…PDVPTERPAF (293 aa)) enclose the Protein kinase domain. Residues 336–344 (LGQGGFGMV) and Lys357 contribute to the ATP site. Catalysis depends on Asp455, which acts as the Proton acceptor.

This sequence in the C-terminal section; belongs to the protein kinase superfamily. Ser/Thr protein kinase family. The protein in the N-terminal section; belongs to the leguminous lectin family.

The protein resides in the cell membrane. It catalyses the reaction L-seryl-[protein] + ATP = O-phospho-L-seryl-[protein] + ADP + H(+). The catalysed reaction is L-threonyl-[protein] + ATP = O-phospho-L-threonyl-[protein] + ADP + H(+). In Arabidopsis thaliana (Mouse-ear cress), this protein is Probable L-type lectin-domain containing receptor kinase S.5 (LECRKS5).